We begin with the raw amino-acid sequence, 92 residues long: Turripeptide UID-02 (92 aa).

Residues 1–21 form the signal peptide; that stretch reads MGFYMLLTVALLLTSLMNVEA. The propeptide occupies 22 to 39; it reads TPVDQAERSALEKSGLGN.

In terms of tissue distribution, expressed by the venom duct.

The protein resides in the secreted. This Gemmula speciosa (Splendid gem-turris) protein is Turripeptide UID-02.